Consider the following 204-residue polypeptide: MAVKRARGKIVRRLGINIFGNPKYTRLLGKKPAPPGKEHGVKQRAKVSVYGEQLKEKQKFRFAYGMSERQFRNLFAQAHRMKGVTGNNMLSLMERRLDNTVFRMGFAISRVQARQMVSHRYFLINGKTANIPSMRISAHDVITTKNRKGIHSIIRHNLTLSQGQRGSWLNVDEEQLSATVSELPRAQDIHPVGNIQHIVEYYSR.

The S4 RNA-binding domain maps to 95-157 (RRLDNTVFRM…KGIHSIIRHN (63 aa)).

It belongs to the universal ribosomal protein uS4 family. Part of the 30S ribosomal subunit. Contacts protein S5. The interaction surface between S4 and S5 is involved in control of translational fidelity.

In terms of biological role, one of the primary rRNA binding proteins, it binds directly to 16S rRNA where it nucleates assembly of the body of the 30S subunit. With S5 and S12 plays an important role in translational accuracy. The sequence is that of Small ribosomal subunit protein uS4 from Treponema pallidum (strain Nichols).